Reading from the N-terminus, the 391-residue chain is Pyridinium-3,5-bisthiocarboxylic acid mononucleotide nickel insertion protein (391 aa).

It belongs to the LarC family.

The catalysed reaction is Ni(II)-pyridinium-3,5-bisthiocarboxylate mononucleotide = pyridinium-3,5-bisthiocarboxylate mononucleotide + Ni(2+). In terms of biological role, involved in the biosynthesis of a nickel-pincer cofactor ((SCS)Ni(II) pincer complex). Binds Ni(2+), and functions in nickel delivery to pyridinium-3,5-bisthiocarboxylic acid mononucleotide (P2TMN), to form the mature cofactor. Is thus probably required for the activation of nickel-pincer cofactor-dependent enzymes. The sequence is that of Pyridinium-3,5-bisthiocarboxylic acid mononucleotide nickel insertion protein from Staphylococcus saprophyticus subsp. saprophyticus (strain ATCC 15305 / DSM 20229 / NCIMB 8711 / NCTC 7292 / S-41).